Reading from the N-terminus, the 5082-residue chain is Malformin synthetase mlfA (5082 aa).

The segment at 225 to 616 is adenylation 1; that stretch reads ERHAANRPHS…CGRADTQVKL (392 aa). The Carrier 1 domain occupies 749–822; that stretch reads SRLEQKIQLA…EAASLAEVQE (74 aa). An O-(pantetheine 4'-phosphoryl)serine modification is found at S783. Positions 860 to 1291 are condensation 1; that stretch reads ENVFPCTTMQ…ALNTLSLLQA (432 aa). The interval 1319–1708 is adenylation 2; that stretch reads DRWVTRQPEG…GRKDTQVKLR (390 aa). A Carrier 2 domain is found at 1846-1923; the sequence is TPTLELERTL…QLAAEVGEPA (78 aa). S1883 bears the O-(pantetheine 4'-phosphoryl)serine mark. Disordered stretches follow at residues 1924 to 1953 and 1986 to 2012; these read GQSA…DGVD and GGSS…KKNA. Composition is skewed to low complexity over residues 1926 to 1950 and 1988 to 2005; these read SASS…STND and SSSN…SSSS. The segment at 2058-2473 is condensation 2; that stretch reads EDIYPATALQ…AVSCSDKETL (416 aa). The interval 2496 to 2888 is adenylation 3; the sequence is RRTPHAPAVC…IGRRDGQLKL (393 aa). The region spanning 3024–3100 is the Carrier 3 domain; the sequence is RPVTSQEHEM…QLICHLNTIR (77 aa). S3061 carries the post-translational modification O-(pantetheine 4'-phosphoryl)serine. Condensation stretches follow at residues 3117–3582 and 3603–4022; these read WVAL…TYDQ and NIYP…EHLV. Residues 4047–4426 are adenylation 4; sequence HNSRQAVFDD…VGRKDNQIKF (380 aa). The 77-residue stretch at 4560–4636 folds into the Carrier 4 domain; sequence MPSTAAERKM…DLSDQAKSLI (77 aa). Position 4597 is an O-(pantetheine 4'-phosphoryl)serine (S4597). The tract at residues 4673–5000 is condensation 5; sequence DVLPTTSFQR…LQTIVQHQNN (328 aa).

This sequence belongs to the NRP synthetase family.

It participates in secondary metabolite biosynthesis. Functionally, nonribosomal peptide synthetase; part of the gene cluster that mediates the biosynthesis of malformins, cyclic pentapeptides with a disulfide bond between 2 consecutive cysteins, that show potential anti-tumor as well as antimalarial and antitrypanosomal properties. The nonribosomal peptide synthetase mlfA is responsible of the formation of the cyclic pentapeptide. The malformin biosynthesis clusters in malformin-producing fungi also contain enzymes involved in the formation of the disulfide bond between the two consecutive cysteins within malformins, in addition to additional tailoring enzymes such as methyltransferases or oxidoreductases. They are also composed of up to 4 major facilitator superfamily transporters, and transcription factors probably involved in the regulation of the expression of those clusters. The protein is Malformin synthetase mlfA of Aspergillus luchuensis (strain CBS 106.47).